The following is a 122-amino-acid chain: UPF0102 protein CTC_01256 (122 aa).

It belongs to the UPF0102 family.

The sequence is that of UPF0102 protein CTC_01256 from Clostridium tetani (strain Massachusetts / E88).